Here is a 422-residue protein sequence, read N- to C-terminus: Glycine amidinotransferase, mitochondrial (422 aa).

The transit peptide at 1–37 directs the protein to the mitochondrion; that stretch reads MLRVRCVRGGSRGAEAVHYIGSMLRKGFVGWVQRSFQ. Active-site residues include aspartate 253 and histidine 302. Cysteine 406 (amidino-cysteine intermediate) is an active-site residue.

It belongs to the amidinotransferase family. In terms of assembly, homodimer.

It localises to the mitochondrion inner membrane. The catalysed reaction is L-arginine + glycine = guanidinoacetate + L-ornithine. Its pathway is amine and polyamine biosynthesis; creatine biosynthesis; creatine from L-arginine and glycine: step 1/2. In terms of biological role, catalyzes the biosynthesis of guanidinoacetate, the immediate precursor of creatine. Creatine plays a vital role in energy metabolism in muscle tissues. May play a role in embryonic and central nervous system development. The polypeptide is Glycine amidinotransferase, mitochondrial (Xenopus tropicalis (Western clawed frog)).